A 449-amino-acid chain; its full sequence is Chromosomal replication initiator protein DnaA (449 aa).

The domain I, interacts with DnaA modulators stretch occupies residues 1–75 (MDTNNDIEKR…EILSQNKVGM (75 aa)). The interval 75–106 (MHLAHSVDVRIEVASKVHVSDHSNINYKATKS) is domain II. The domain III, AAA+ region stretch occupies residues 107–321 (SIKDSYTFEN…GAIIKISVNA (215 aa)). Positions 151, 153, 154, and 155 each coordinate ATP. The domain IV, binds dsDNA stretch occupies residues 322–449 (NLMNAPIDLN…LNELNDKKQH (128 aa)).

Belongs to the DnaA family. As to quaternary structure, oligomerizes as a right-handed, spiral filament on DNA at oriC.

It localises to the cytoplasm. Its function is as follows. Plays an essential role in the initiation and regulation of chromosomal replication. ATP-DnaA binds to the origin of replication (oriC) to initiate formation of the DNA replication initiation complex once per cell cycle. Binds the DnaA box (a 9 base pair repeat at the origin) and separates the double-stranded (ds)DNA. Forms a right-handed helical filament on oriC DNA; dsDNA binds to the exterior of the filament while single-stranded (ss)DNA is stabiized in the filament's interior. The ATP-DnaA-oriC complex binds and stabilizes one strand of the AT-rich DNA unwinding element (DUE), permitting loading of DNA polymerase. After initiation quickly degrades to an ADP-DnaA complex that is not apt for DNA replication. Binds acidic phospholipids. This is Chromosomal replication initiator protein DnaA from Helicobacter acinonychis (strain Sheeba).